Consider the following 321-residue polypeptide: Fimbria adhesin protein (321 aa).

An N-terminal signal peptide occupies residues 1–18 (MKKLTLFIGLMALGTTSA).

Belongs to the fimbrial protein family.

It is found in the fimbrium. The chain is Fimbria adhesin protein (mrkD) from Klebsiella pneumoniae.